The primary structure comprises 600 residues: FERM domain-containing protein 3 (600 aa).

Residues methionine 31–lysine 311 enclose the FERM domain. The segment at serine 413–arginine 440 is disordered. A helical transmembrane segment spans residues leucine 534–glutamate 554.

The protein localises to the membrane. In Xenopus tropicalis (Western clawed frog), this protein is FERM domain-containing protein 3 (frmd3).